We begin with the raw amino-acid sequence, 960 residues long: Ran GTPase-activating protein 2 (960 aa).

LRR repeat units follow at residues 69–92, 132–156, 162–185, 227–254, and 313–340; these read HLNL…LIAE, GCRL…LYNF, LYSL…VGKA, LGTL…AFRM, and RDCL…CFNS. The tract at residues 370–408 is disordered; it reads NIDFGRRGDDELLSSDEEEEQGAEDASMEEDAFNTSRET. Acidic residues predominate over residues 380–401; the sequence is ELLSSDEEEEQGAEDASMEEDA. LRR repeat units lie at residues 475 to 498, 538 to 561, 568 to 595, and 663 to 685; these read ASSM…VIAK, GCKI…ALKD, SFSL…LTEC, and NRNL…KALA. Residues 777 to 819 are disordered; the sequence is PENVNVGDEDDDLGSLDGDQEEYNSKSSDSEDADLDDDDEDDD. Composition is skewed to acidic residues over residues 783-798 and 806-819; these read GDED…DQEE and SEDA…EDDD.

Its subcellular location is the nucleus. Its function is as follows. GTPase system comprising ran-1, ran-2 and ran-3 is essential in nucleocytoplasmic trafficking. Ran-2 is a GTPase activator for the nuclear RAS-related regulatory protein Ran, converting it to the putatively inactive GDP-bound state. Required for correct chromosome alignment and segregation on the metaphase plate. The chain is Ran GTPase-activating protein 2 (ran-2) from Caenorhabditis elegans.